Here is a 345-residue protein sequence, read N- to C-terminus: G-protein coupled receptor str-33 (345 aa).

The Extracellular segment spans residues Met1–Thr11. Residues Ile12–Ala32 traverse the membrane as a helical segment. Topologically, residues Arg33 to Asn37 are cytoplasmic. A helical transmembrane segment spans residues Ile38–Cys58. Residues Thr59–Met92 lie on the Extracellular side of the membrane. Asn71 carries an N-linked (GlcNAc...) asparagine glycan. A helical membrane pass occupies residues Leu93–Ile113. The Cytoplasmic portion of the chain corresponds to Tyr114–Lys133. Residues Leu134–Phe154 traverse the membrane as a helical segment. The Extracellular portion of the chain corresponds to Cys155 to Ser204. Residues Val205 to Cys225 traverse the membrane as a helical segment. Residues Gly226 to Gln258 lie on the Cytoplasmic side of the membrane. The helical transmembrane segment at Ile259–Phe279 threads the bilayer. Residues Asn280–Gly288 lie on the Extracellular side of the membrane. The helical transmembrane segment at Ile289 to Val309 threads the bilayer. Residues Thr310–Leu345 are Cytoplasmic-facing.

Belongs to the nematode receptor-like protein str family. As to expression, detected in ALM and PLM mechanosensory neurons and head neurons.

It localises to the cell membrane. Its function is as follows. Regulates egg-laying and locomotion. Likely to act upstream of goa-1 to suppress 5-hydroxytryptamine (5-HT) biosynthesis in hermaphrodite-specific neurons (HSNs) through inhibition of tph-1 transcription. This chain is G-protein coupled receptor str-33, found in Caenorhabditis elegans.